A 432-amino-acid chain; its full sequence is MAAAAGRSAWLAAWGGRLRRGLAAGRRAVPTRGPLAAAVAGVALAGAGAAWHHGRVKAAAREGSRTVSAQKNYLGPIEKLSLRKQRFMQFSSLEHDGEYYMTPRDFLFSVMFEQVERKTLVKKLAKKDIEDVLSGIQTARCGSTFFRDLGDKGVISYTEYLFLLTILTKPHSGFHVAFKMLDVDGNEMIERKEFVRLQKIISKQDGFKTVKTNETEYQDPTVKEPGVNTTLQVRFFGKRGEKKLHYKEFRRFVENLQTEVQEMEFLQFSKGLNFMRKEDFAEWLLFFTNTENKDIYWRNVREKLSVGESISLDEFKSFCHFTTHLEDFAIAMQTFSLAHRPVRLAEFKRAVKVATGQELSDNLLDTVFKIFDLDGDECLSHGEFLGVLKNRMHRGLWVSQQQSVQEYWKCVKKESIKGVKEAWRQQAGKGPF.

The transit peptide at M1–L22 directs the protein to the mitochondrion. Residues K169 to Q204 form the EF-hand 1 domain. Ca(2+) contacts are provided by D182, D184, N186, M188, E190, and E193. Residue S202 is modified to Phosphoserine. The 36-residue stretch at E224–E259 folds into the EF-hand 2; degenerate domain. An EF-hand 3; degenerate domain is found at T290–L325. The EF-hand 4 domain maps to L359–R394. Residues D372, D374, D376, C378, and E383 each coordinate Ca(2+).

The protein belongs to the MICU1 family. MICU2 subfamily. Heterodimer; disulfide-linked; heterodimerizes with MICU1. Component of the uniplex complex, composed of MCU, EMRE/SMDT1, MICU1 and MICU2 in a 4:4:1:1 stoichiometry.

It localises to the mitochondrion intermembrane space. The protein localises to the mitochondrion inner membrane. In terms of biological role, calcium sensor of the mitochondrial calcium uniporter (MCU) channel, which senses calcium level via its EF-hand domains. MICU1 and MICU2 form a disulfide-linked heterodimer that stimulates and inhibits MCU activity, depending on the concentration of calcium. At low calcium levels, MICU1 occludes the pore of the MCU channel, preventing mitochondrial calcium uptake. At higher calcium levels, calcium-binding to MICU1 and MICU2 induces a conformational change that weakens MCU-MICU1 interactions and moves the MICU1-MICU2 heterodimer away from the pore, allowing calcium permeation through the MCU channel. The protein is Calcium uptake protein 2, mitochondrial (Micu2) of Rattus norvegicus (Rat).